We begin with the raw amino-acid sequence, 154 residues long: Transcription antitermination protein NusB (154 aa).

It belongs to the NusB family.

In terms of biological role, involved in transcription antitermination. Required for transcription of ribosomal RNA (rRNA) genes. Binds specifically to the boxA antiterminator sequence of the ribosomal RNA (rrn) operons. This is Transcription antitermination protein NusB from Hyphomonas neptunium (strain ATCC 15444).